We begin with the raw amino-acid sequence, 235 residues long: Protein Thf1 (235 aa).

A coiled-coil region spans residues 179-228 (LNLSSDKLQKDLDLYRSNVDKMGQLLAVIEDALEAERKKREKAKQEVATT).

It belongs to the THF1 family.

May be involved in photosynthetic membrane biogenesis. This chain is Protein Thf1, found in Rippkaea orientalis (strain PCC 8801 / RF-1) (Cyanothece sp. (strain PCC 8801)).